The primary structure comprises 130 residues: Small ribosomal subunit protein uS9 (130 aa).

The segment at 108–130 (SREKERKKYGQRGARARFQYSKR) is disordered.

It belongs to the universal ribosomal protein uS9 family.

The polypeptide is Small ribosomal subunit protein uS9 (Solidesulfovibrio magneticus (strain ATCC 700980 / DSM 13731 / RS-1) (Desulfovibrio magneticus)).